The primary structure comprises 233 residues: Large ribosomal subunit protein uL1 (233 aa).

It belongs to the universal ribosomal protein uL1 family. Part of the 50S ribosomal subunit.

In terms of biological role, binds directly to 23S rRNA. The L1 stalk is quite mobile in the ribosome, and is involved in E site tRNA release. Its function is as follows. Protein L1 is also a translational repressor protein, it controls the translation of the L11 operon by binding to its mRNA. The protein is Large ribosomal subunit protein uL1 of Geotalea uraniireducens (strain Rf4) (Geobacter uraniireducens).